Reading from the N-terminus, the 233-residue chain is Nickel import system ATP-binding protein NikE (233 aa).

An ABC transporter domain is found at 2–228; it reads IELKHVTFGY…DRHSYTKELV (227 aa). Residue 35-42 participates in ATP binding; the sequence is GESGCGKS.

Belongs to the ABC transporter superfamily. The complex is composed of two ATP-binding proteins (NikD and NikE), two transmembrane proteins (NikB and NikC) and a solute-binding protein (NikA).

The protein localises to the cell membrane. The enzyme catalyses Ni(2+)(out) + ATP + H2O = Ni(2+)(in) + ADP + phosphate + H(+). Its function is as follows. Part of the ABC transporter complex NikABCDE (Opp2) involved in nickel import. Probably responsible for energy coupling to the transport system. The polypeptide is Nickel import system ATP-binding protein NikE (Staphylococcus aureus (strain bovine RF122 / ET3-1)).